Here is a 294-residue protein sequence, read N- to C-terminus: Probable 2-(5''-triphosphoribosyl)-3'-dephosphocoenzyme-A synthase (294 aa).

Belongs to the CitG/MdcB family.

It carries out the reaction 3'-dephospho-CoA + ATP = 2'-(5''-triphospho-alpha-D-ribosyl)-3'-dephospho-CoA + adenine. The sequence is that of Probable 2-(5''-triphosphoribosyl)-3'-dephosphocoenzyme-A synthase from Streptococcus pyogenes serotype M49 (strain NZ131).